A 391-amino-acid chain; its full sequence is Small ribosomal subunit protein bS1 (391 aa).

S1 motif domains are found at residues 16–90 (GDKV…LSRR), 108–173 (NEII…LSRK), 194–262 (GDVI…LSIK), and 279–348 (NDVI…LSIK).

Belongs to the bacterial ribosomal protein bS1 family.

In terms of biological role, binds mRNA; thus facilitating recognition of the initiation point. It is needed to translate mRNA with a short Shine-Dalgarno (SD) purine-rich sequence. This chain is Small ribosomal subunit protein bS1 (rpsA), found in Staphylococcus aureus (strain N315).